Consider the following 437-residue polypeptide: Enolase (437 aa).

A (2R)-2-phosphoglycerate-binding site is contributed by glutamine 162. Glutamate 204 (proton donor) is an active-site residue. 3 residues coordinate Mg(2+): aspartate 251, glutamate 297, and aspartate 324. (2R)-2-phosphoglycerate contacts are provided by lysine 349, arginine 378, serine 379, and lysine 400. Lysine 349 serves as the catalytic Proton acceptor.

The protein belongs to the enolase family. Mg(2+) serves as cofactor.

It is found in the cytoplasm. It localises to the secreted. The protein localises to the cell surface. The enzyme catalyses (2R)-2-phosphoglycerate = phosphoenolpyruvate + H2O. Its pathway is carbohydrate degradation; glycolysis; pyruvate from D-glyceraldehyde 3-phosphate: step 4/5. Catalyzes the reversible conversion of 2-phosphoglycerate (2-PG) into phosphoenolpyruvate (PEP). It is essential for the degradation of carbohydrates via glycolysis. The chain is Enolase from Prosthecochloris aestuarii (strain DSM 271 / SK 413).